Consider the following 282-residue polypeptide: ADP-ribosyl cyclase/cyclic ADP-ribose hydrolase (282 aa).

A signal peptide spans 1–24 (MSPVAIIACVCLAVTLTSISPSEA). Intrachain disulfides connect cysteine 39–cysteine 58, cysteine 75–cysteine 155, cysteine 136–cysteine 149, cysteine 230–cysteine 251, and cysteine 263–cysteine 272.

It belongs to the ADP-ribosyl cyclase family. Post-translationally, has different isoforms which may be the result of different amounts of phosphorylation. Immature occoyctes. Oocytes.

The protein resides in the cytoplasmic vesicle. It carries out the reaction NAD(+) = cyclic ADP-beta-D-ribose + nicotinamide + H(+). The enzyme catalyses nicotinate + NADP(+) = nicotinate-adenine dinucleotide phosphate + nicotinamide. It catalyses the reaction 2'-phospho-cyclic ADP-ribose + nicotinate = nicotinate-adenine dinucleotide phosphate. With respect to regulation, activity is presumably regulated by its sequestration in vesicles before egg fertilization. After fertilization and upon NADase release, it could then be regulated via its potential phosphorylation sites. In terms of biological role, synthesizes cyclic ADP-ribose (cADPR), a second messenger for calcium mobilization from endoplasmic reticulum; ADP-ribose is a minor product. Synthesizes the Ca(2+) mobilizer nicotinate-adenine dinucleotide phosphate from 2'-phospho-cADPR and nicotinic acid as well as from NADP(+) and nicotinic acid; with NADP(+) as substrate preferentially catalyzes NADP(+) hydrolysis rather than NAADP(+) synthesis, about 70-fold better at pH 7.4. Has cADPR hydrolase activity at very high enzyme concentrations, which is probably not physiological. The conversion of NAD(+) into ADP-ribose is also only observed at high enzyme concentrations and results from the hydrolysis of cADP-ribose. The protein is ADP-ribosyl cyclase/cyclic ADP-ribose hydrolase of Aplysia californica (California sea hare).